A 512-amino-acid chain; its full sequence is UDP-N-acetylmuramate--L-alanine ligase (512 aa).

Residue 132–138 (GAHGKTT) participates in ATP binding.

Belongs to the MurCDEF family.

It is found in the cytoplasm. It carries out the reaction UDP-N-acetyl-alpha-D-muramate + L-alanine + ATP = UDP-N-acetyl-alpha-D-muramoyl-L-alanine + ADP + phosphate + H(+). It participates in cell wall biogenesis; peptidoglycan biosynthesis. Functionally, cell wall formation. This Bifidobacterium longum (strain NCC 2705) protein is UDP-N-acetylmuramate--L-alanine ligase.